A 279-amino-acid polypeptide reads, in one-letter code: Urease accessory protein UreD (279 aa).

Belongs to the UreD family. UreD, UreF and UreG form a complex that acts as a GTP-hydrolysis-dependent molecular chaperone, activating the urease apoprotein by helping to assemble the nickel containing metallocenter of UreC. The UreE protein probably delivers the nickel.

It localises to the cytoplasm. Required for maturation of urease via the functional incorporation of the urease nickel metallocenter. The protein is Urease accessory protein UreD of Paracoccus denitrificans (strain Pd 1222).